We begin with the raw amino-acid sequence, 152 residues long: Acyl carrier protein, mitochondrial (152 aa).

The Carrier domain maps to 73–148 (KLINERVLLV…DIIKYVADKE (76 aa)). Ser-108 carries the post-translational modification O-(pantetheine 4'-phosphoryl)serine.

It belongs to the acyl carrier protein (ACP) family. As to quaternary structure, complex I is composed of about 45 different subunits.

Its subcellular location is the mitochondrion. Functionally, carrier of the growing fatty acid chain in fatty acid biosynthesis. Accessory and non-catalytic subunit of the mitochondrial membrane respiratory chain NADH dehydrogenase (Complex I), which functions in the transfer of electrons from NADH to the respiratory chain. The polypeptide is Acyl carrier protein, mitochondrial (Drosophila melanogaster (Fruit fly)).